Reading from the N-terminus, the 121-residue chain is MKLFRCFKPCRGQSSNPHTSESQERNIQTGSPIYTVSSNYQESRTSRMLDFSTSLTPEGLPIFTQTFRQPKTPMPSRITSPKMVIIVNPGSTRCLGVQRQIKTTSTTTPSMRDVWKRLSQL.

The tract at residues 11-30 is disordered; that stretch reads RGQSSNPHTSESQERNIQTG. Residues 12–30 are compositionally biased toward polar residues; it reads GQSSNPHTSESQERNIQTG.

Belongs to the geminiviridae protein AC4/C4 family.

Its function is as follows. Pathogenicity determinant. May act as a suppressor of RNA-mediated gene silencing, also known as post-transcriptional gene silencing (PTGS), a mechanism of plant viral defense that limits the accumulation of viral RNAs. The sequence is that of Protein AC4 from Cabbage leaf curl virus (isolate Jamaica) (CaLCuV).